The primary structure comprises 239 residues: Phosphoglycolate phosphatase (239 aa).

The active-site Nucleophile is aspartate 9. 2 residues coordinate Mg(2+): aspartate 9 and aspartate 11. A substrate-binding site is contributed by lysine 157. Mg(2+) contacts are provided by aspartate 180 and aspartate 184.

The protein belongs to the archaeal SPP-like hydrolase family. Mg(2+) is required as a cofactor.

The catalysed reaction is 2-phosphoglycolate + H2O = glycolate + phosphate. Catalyzes the dephosphorylation of 2-phosphoglycolate. This Thermococcus kodakarensis (strain ATCC BAA-918 / JCM 12380 / KOD1) (Pyrococcus kodakaraensis (strain KOD1)) protein is Phosphoglycolate phosphatase.